Consider the following 452-residue polypeptide: Phosphoglucosamine mutase (452 aa).

The active-site Phosphoserine intermediate is the Ser108. Ser108, Asp247, Asp249, and Asp251 together coordinate Mg(2+). Ser108 is modified (phosphoserine).

Belongs to the phosphohexose mutase family. It depends on Mg(2+) as a cofactor. Post-translationally, activated by phosphorylation.

It carries out the reaction alpha-D-glucosamine 1-phosphate = D-glucosamine 6-phosphate. Functionally, catalyzes the conversion of glucosamine-6-phosphate to glucosamine-1-phosphate. The protein is Phosphoglucosamine mutase of Burkholderia pseudomallei (strain K96243).